The chain runs to 406 residues: Succinylornithine transaminase (406 aa).

At lysine 252 the chain carries N6-(pyridoxal phosphate)lysine.

This sequence belongs to the class-III pyridoxal-phosphate-dependent aminotransferase family. AstC subfamily. Requires pyridoxal 5'-phosphate as cofactor.

The enzyme catalyses N(2)-succinyl-L-ornithine + 2-oxoglutarate = N-succinyl-L-glutamate 5-semialdehyde + L-glutamate. It functions in the pathway amino-acid degradation; L-arginine degradation via AST pathway; L-glutamate and succinate from L-arginine: step 3/5. Catalyzes the transamination of N(2)-succinylornithine and alpha-ketoglutarate into N(2)-succinylglutamate semialdehyde and glutamate. Can also act as an acetylornithine aminotransferase. The chain is Succinylornithine transaminase from Escherichia fergusonii (strain ATCC 35469 / DSM 13698 / CCUG 18766 / IAM 14443 / JCM 21226 / LMG 7866 / NBRC 102419 / NCTC 12128 / CDC 0568-73).